Reading from the N-terminus, the 306-residue chain is HTH-type transcriptional regulator AlkR (306 aa).

The 99-residue stretch at 207–305 (SNALAAIHAY…EQSPKHYRQQ (99 aa)) folds into the HTH araC/xylS-type domain. 2 DNA-binding regions (H-T-H motif) span residues 224 to 245 (ESLADQCCMSRSKFATLFQSIV) and 272 to 295 (IQQIANKVGYSSETAFSQAFKRQF).

It functions in the pathway hydrocarbon metabolism; alkane degradation. In terms of biological role, this protein activates the expression of the alkane 1-monooxygenase AlkM. The sequence is that of HTH-type transcriptional regulator AlkR (alkR) from Acinetobacter baylyi (strain ATCC 33305 / BD413 / ADP1).